We begin with the raw amino-acid sequence, 113 residues long: MKVTMLPLQLNDEINSASFGPASSSTSHSSTIFCVHHRVRYIYVPRHCLLRSLTYATTNFTKFSKFVYYLAITLHTSLLTKLIYCHADLYALQSIKYKRLRINNGMLDSPKRE.

This is an uncharacterized protein from Schizosaccharomyces pombe (strain 972 / ATCC 24843) (Fission yeast).